Reading from the N-terminus, the 756-residue chain is MILSSQLMLALIAVSGYGKAMQVPKKDHENRQYFAIESYDDVGNLLAEHSDWSFEHDVRGLANHYVFSKPLQSLGKRDAIDTGYSENIIDFHDLPPVQLHKRLPIGDSSMEQIQNARILFNISDPLFDQQWHLINPNYPGNDVNVTGLWKENITGYGVVAALVDDGLDYENEDLKDNFCVEGSWDFNDNNPLPKPRLKDDYHGTRCAGEIAAFRNDICGVGVAYNSKVSGIRILSGQITAEDEAASLIYGLDVNDIYSCSWGPSDDGKTMQAPDTLVKKAIIKGVTEGRDAKGALYVFASGNGGMFGDSCNFDGYTNSIFSITVGAIDWKGLHPPYSESCSAVMVVTYSSGSGNYIKTTDLDEKCSNTHGGTSAAAPLAAGIYTLVLEANPNLTWRDVQYLSILSSEEINPHDGKWQDTAMGKRYSHTYGFGKLDAYNIVHMAKSWINVNPQGWLYLPTIVEKQSISNSDEVIESTVSVSAEEFKQNNLKRLEHVTVTVDIDAPYRGHVLVDLISPDGVTSTLATARRLDKNRYGFQNWTFMSVAHWGSSGVGSWKLKVKSTHDNEIVTLKSWRLKMFGETIDAKKAKVISYGNDKEDAEVKSTESKTTTPTAQTSSFTTTSGEETSGANKLPRPEQAAQLYLAIFVIGAIVIIIYYLFFLKSRRIIRRSRAEAYEFDIIDTDSEYDSSINQTAESISGEVNDDNLEDFNFDINEEELSPRESSSNNPFGNESLESFDNSPDHTSNLLGQNSIPNK.

The first 24 residues, 1 to 24, serve as a signal peptide directing secretion; it reads MILSSQLMLALIAVSGYGKAMQVP. Asn121, Asn144, and Asn152 each carry an N-linked (GlcNAc...) asparagine glycan. The Peptidase S8 domain occupies 130-440; that stretch reads QWHLINPNYP…FGKLDAYNIV (311 aa). Active-site charge relay system residues include Asp164 and His202. Cystine bridges form between Cys218/Cys365 and Cys310/Cys340. Ser373 serves as the catalytic Charge relay system. Residues Asn392 and Asn538 are each glycosylated (N-linked (GlcNAc...) asparagine). In terms of domain architecture, P/Homo B spans 449-583; that stretch reads VNPQGWLYLP…RLKMFGETID (135 aa). The segment at 599 to 632 is disordered; it reads AEVKSTESKTTTPTAQTSSFTTTSGEETSGANKL. Over residues 606–628 the composition is skewed to low complexity; sequence SKTTTPTAQTSSFTTTSGEETSG. A helical transmembrane segment spans residues 641–661; the sequence is LYLAIFVIGAIVIIIYYLFFL. The tract at residues 715-756 is disordered; the sequence is EEELSPRESSSNNPFGNESLESFDNSPDHTSNLLGQNSIPNK. Residues 721–756 are compositionally biased toward polar residues; sequence RESSSNNPFGNESLESFDNSPDHTSNLLGQNSIPNK.

The protein belongs to the peptidase S8 family. Furin subfamily. Ca(2+) serves as cofactor.

The protein localises to the membrane. Its function is as follows. Probably involved in the processing of the precursor of m1-toxin and alpha-factor. The protein is Protease KEX1 (KEX1) of Kluyveromyces lactis (strain ATCC 8585 / CBS 2359 / DSM 70799 / NBRC 1267 / NRRL Y-1140 / WM37) (Yeast).